The sequence spans 394 residues: Ceramide glucosyltransferase-B (394 aa).

At 1-10 (MAVLDLALQG) the chain is on the lumenal side. The helical transmembrane segment at 11 to 32 (LAIFGCILFFVLWFMHFLSIVY) threads the bilayer. At 33 to 195 (TRLHLNKKVS…QVYFGTSHPR (163 aa)) the chain is on the cytoplasmic side. D92 is a short sequence motif (D1). Position 144 (D144) is a short sequence motif, D2. The helical transmembrane segment at 196-215 (SYISANVTGIKCVTGMSCLM) threads the bilayer. At 216 to 287 (RKEVLDQAGG…KLRINMLPAT (72 aa)) the chain is on the lumenal side. D236 is a short sequence motif (D3). Residue D236 is the Proton acceptor of the active site. A (Q/R)XXRW motif is present at residues 272–276 (RMIRW). A helical transmembrane segment spans residues 288–304 (IICEPISECFVASLIIG). Residues 305-309 (WAAHH) are Cytoplasmic-facing. A helical transmembrane segment spans residues 310-328 (IFRWDIMVFFMCHCLAWFI). Residues 329-348 (FDYIQLRGVQGGPLNFSKLD) lie on the Lumenal side of the membrane. A helical transmembrane segment spans residues 349–369 (YAVAWFIRESMTIYIFLSALW). At 370-394 (DPTISWRTGRYRLRCGGTAEEILDV) the chain is on the cytoplasmic side.

It belongs to the glycosyltransferase 2 family.

The protein resides in the golgi apparatus membrane. The enzyme catalyses an N-acylsphing-4-enine + UDP-alpha-D-glucose = a beta-D-glucosyl-(1&lt;-&gt;1')-N-acylsphing-4-enine + UDP + H(+). It carries out the reaction UDP-alpha-D-xylose + an N-acylsphing-4-enine = a beta-D-xylosyl-(1&lt;-&gt;1')-N-acylsphing-4-enine + UDP + H(+). It catalyses the reaction N-(9Z-octadecenoyl)-sphing-4-enine + UDP-alpha-D-xylose = beta-D-xylosyl-(1&lt;-&gt;1')-N-(9Z-octadecenoyl)-sphing-4-enine + UDP + H(+). It participates in lipid metabolism; sphingolipid metabolism. Participates in the initial step of the glucosylceramide-based glycosphingolipid/GSL synthetic pathway at the cytosolic surface of the Golgi. Catalyzes the transfer of glucose from UDP-glucose to ceramide to produce glucosylceramide/GlcCer (such as beta-D-glucosyl-(1&lt;-&gt;1')-N-acylsphing-4-enine). Glucosylceramide is the core component of glycosphingolipids/GSLs, amphipathic molecules consisting of a ceramide lipid moiety embedded in the outer leaflet of the membrane, linked to one of hundreds of different externally oriented oligosaccharide structures. Glycosphingolipids are essential components of membrane microdomains that mediate membrane trafficking and signal transduction. They are implicated in many fundamental cellular processes, including growth, differentiation, migration, morphogenesis, cell-to-cell and cell-to-matrix interactions. Catalyzes the synthesis of xylosylceramide/XylCer (such as beta-D-xylosyl-(1&lt;-&gt;1')-N-acylsphing-4-enine) using UDP-Xyl as xylose donor. In Xenopus laevis (African clawed frog), this protein is Ceramide glucosyltransferase-B (ugcg-b).